A 98-amino-acid polypeptide reads, in one-letter code: MSLVHINIFLAFTVSLVGLLMYRSHLMSSLLCLEGMMLSLFVMATMMVLNTHFTLASMMPIILLVFAACERALGLSLLVMVSNTYGVDHVQNLNLLQC.

Helical transmembrane passes span Met-1–Met-21, His-25–Thr-45, and Met-59–Val-81.

Belongs to the complex I subunit 4L family. Core subunit of respiratory chain NADH dehydrogenase (Complex I) which is composed of 45 different subunits.

It is found in the mitochondrion inner membrane. It catalyses the reaction a ubiquinone + NADH + 5 H(+)(in) = a ubiquinol + NAD(+) + 4 H(+)(out). Core subunit of the mitochondrial membrane respiratory chain NADH dehydrogenase (Complex I) which catalyzes electron transfer from NADH through the respiratory chain, using ubiquinone as an electron acceptor. Part of the enzyme membrane arm which is embedded in the lipid bilayer and involved in proton translocation. This Equus caballus (Horse) protein is NADH-ubiquinone oxidoreductase chain 4L (MT-ND4L).